The following is a 713-amino-acid chain: Polyribonucleotide nucleotidyltransferase (713 aa).

Asp495 and Asp501 together coordinate Mg(2+). Residues 562–621 (PRLLTLKIPVDMIGLVIGPGGKTIKRIVEETGAKVDIEDDGTVVVSSIDGAKALAAKQII) form the KH domain. The 70-residue stretch at 631 to 700 (DKVYLGTVTR…QKGRINLTRR (70 aa)) folds into the S1 motif domain.

Belongs to the polyribonucleotide nucleotidyltransferase family. Requires Mg(2+) as cofactor.

It localises to the cytoplasm. It catalyses the reaction RNA(n+1) + phosphate = RNA(n) + a ribonucleoside 5'-diphosphate. Its function is as follows. Involved in mRNA degradation. Catalyzes the phosphorolysis of single-stranded polyribonucleotides processively in the 3'- to 5'-direction. This is Polyribonucleotide nucleotidyltransferase from Gloeobacter violaceus (strain ATCC 29082 / PCC 7421).